A 511-amino-acid chain; its full sequence is GMP synthase [glutamine-hydrolyzing] (511 aa).

Residues 5 to 195 form the Glutamine amidotransferase type-1 domain; that stretch reads DILVLDFGSQ…AKYACNCDSV (191 aa). Residue Cys82 is the Nucleophile of the active site. Catalysis depends on residues His169 and Glu171. Residues 196-386 form the GMPS ATP-PPase domain; sequence WNMGSFAKTQ…LGLSKDVVYR (191 aa). 223–229 is a binding site for ATP; that stretch reads SGGVDSS.

In terms of assembly, homodimer.

The catalysed reaction is XMP + L-glutamine + ATP + H2O = GMP + L-glutamate + AMP + diphosphate + 2 H(+). It functions in the pathway purine metabolism; GMP biosynthesis; GMP from XMP (L-Gln route): step 1/1. Catalyzes the synthesis of GMP from XMP. This Campylobacter lari (strain RM2100 / D67 / ATCC BAA-1060) protein is GMP synthase [glutamine-hydrolyzing].